Here is a 313-residue protein sequence, read N- to C-terminus: Olfactory receptor 5H15 (313 aa).

Topologically, residues 1–28 (MEEENATLLTEFVLTGFLYQPQWKIPLF) are extracellular. An N-linked (GlcNAc...) asparagine glycan is attached at asparagine 5. A helical transmembrane segment spans residues 29-49 (LAFLVIYLITIMGNLGLIAVI). The Cytoplasmic segment spans residues 50-56 (WKDPHLH). The chain crosses the membrane as a helical span at residues 57–77 (IPMYLLLGNLAFVDAWISSTV). Residues 78 to 98 (TPKMLNNFLAKSKMISLSECK) lie on the Extracellular side of the membrane. Cysteines 97 and 179 form a disulfide. Residues 99–119 (IQFFSIAIGVTTECFLLATMA) form a helical membrane-spanning segment. The Cytoplasmic segment spans residues 120–143 (YDRYVAICKPLLYPAIMTNGLCIR). Residues 144–164 (LLILSYIAGILHALIHEGFLF) traverse the membrane as a helical segment. The Extracellular portion of the chain corresponds to 165-195 (RLTFCNSNIVHHIYCDTIPLSKISCTDSSIN). The chain crosses the membrane as a helical span at residues 196–216 (FLMVFIFSGSIQVFSIVTILI). Topologically, residues 217 to 240 (SYTFVLFTVLEKKSDKGVRKAFST) are cytoplasmic. Residues 241–261 (CGAHLFSVCLYYGPLLLMYVG) traverse the membrane as a helical segment. Topologically, residues 262–271 (PASPQADGQN) are extracellular. The chain crosses the membrane as a helical span at residues 272–292 (MVEPLFYTVIIPLLNPIIYSL). Residues 293-313 (RNKQVIVSFIKMLKRNVKVSY) lie on the Cytoplasmic side of the membrane.

The protein belongs to the G-protein coupled receptor 1 family.

It localises to the cell membrane. Its function is as follows. Odorant receptor. This Homo sapiens (Human) protein is Olfactory receptor 5H15 (OR5H15).